The following is a 128-amino-acid chain: Large ribosomal subunit protein bL12 (128 aa).

The protein belongs to the bacterial ribosomal protein bL12 family. Homodimer. Part of the ribosomal stalk of the 50S ribosomal subunit. Forms a multimeric L10(L12)X complex, where L10 forms an elongated spine to which 2 to 4 L12 dimers bind in a sequential fashion. Binds GTP-bound translation factors.

Forms part of the ribosomal stalk which helps the ribosome interact with GTP-bound translation factors. Is thus essential for accurate translation. The chain is Large ribosomal subunit protein bL12 from Synechococcus sp. (strain ATCC 27144 / PCC 6301 / SAUG 1402/1) (Anacystis nidulans).